A 419-amino-acid chain; its full sequence is MGIRLLKMHGYDVDPNALKHFKQEDGKFSCYGGQMIESASPIYNLYRASQLRFPGEEILEEATKFAYNFLQEKIANNQIQEKWVISEHLIDEIKLGLKMPWYATLPRVEAAYYLQYYAGTGDVWIGKTFYRMPEISNDTYKELAVLDFNRCQAQHQFEWIYMQEWYQSSSVKAFGISKKELLLAYFLAAATIFEPERTQERIMWAKTQIVSRMIKSFLSKENTLSLEQKTTLLIDFGHDINGLNKINSVEKGNGLAGTLLTTFQQLLEEFDRYTTHQLKNAWSQWFVKLQQGEGDGGADAELLANTLNICAGHIAFNEDILSHRDYTTLSSLTTKICQRLTQIQDKKILEIKDGSIKDKELEEEMQALVKLVLEENGGGIDRNIKQTFLSVFKTFYYCAYHHAETTDAHIFKVLFEPVV.

Substrate is bound at residue lysine 82.

The protein belongs to the terpene synthase family. Tpsc subfamily. The cofactor is Mg(2+). Ubiquitous expression in roots, stems, leaves and flowers.

It is found in the plastid. The protein resides in the chloroplast. The catalysed reaction is (2E,6E,10E)-geranylgeranyl diphosphate = (+)-copalyl diphosphate. The protein operates within secondary metabolite biosynthesis; terpenoid biosynthesis. Involved in the biosynthesis of ent-kaurene diterpenoids natural products such as oridonin, miltiradiene, eriocalyxin B and nezukol, known to exhibit antitumor, anti-inflammatory and antibacterial activities. Catalyzes the conversion of (2E,6E,10E)-geranylgeranyl diphosphate (GGPP) to (+)-copalyl diphosphate ((+)-CPP). The chain is Copalyl diphosphate synthase 2, chloroplastic from Isodon rubescens (Rabdosia rubescens).